Here is an 874-residue protein sequence, read N- to C-terminus: Speckle targeted PIP5K1A-regulated poly(A) polymerase (874 aa).

Residues 16–46 (FRCCLCHVTTANRPSLDAHLGGRKHRHLVEL) form a Matrin-type zinc finger. One can recognise an RRM domain in the interval 56-128 (RSVFVSGFPR…HRLRVRPREQ (73 aa)). A disordered region spans residues 113-146 (QHSLGGHRLRVRPREQKEFQSPASKSPKGAAPDS). Ser205 contributes to the ATP binding site. Mg(2+) is bound by residues Asp216 and Asp218. Positions 216 and 218 each coordinate UTP. Positions 252-334 (QALACTPASP…ELAETPKEEK (83 aa)) are disordered. A compositionally biased stretch (pro residues) spans 259–269 (ASPPDSQPPAS). Residues 280–291 (TPSSSLAPQTPD) are compositionally biased toward polar residues. ATP is bound at residue Asn392. UTP contacts are provided by Asn392, Arg414, Tyr432, and His549. Residues 491–549 (LSSLLAQFFSCVSCWDLRGSLLSLREGQALPVAGGLPSNLWEGLRLGPLNLQDPFDLSH) enclose the PAP-associated domain. A KA1; binds the bulging loops of U6 snRNA but is dispensable for terminal uridylyltransferase activity region spans residues 598 to 874 (SSPSSLLSAT…FLPQAIRHLK (277 aa)). Disordered stretches follow at residues 638–662 (ATKRTRSEGGGTGESSQGGTSKRLK) and 705–761 (MQSP…ASLP). Ser750 is modified (phosphoserine).

It belongs to the DNA polymerase type-B-like family. As to quaternary structure, associates with the cleavage and polyadenylation specificity factor (CPSF) complex. Interacts with CPSF1 and CPSF3; the interaction is direct. Interacts with PIP5K1A. It depends on Mg(2+) as a cofactor. The cofactor is Mn(2+). Phosphorylated by CK1 in the proline-rich (Pro-rich) region. In terms of tissue distribution, widely expressed.

It is found in the nucleus. The protein localises to the nucleolus. The protein resides in the nucleus speckle. The catalysed reaction is RNA(n) + UTP = RNA(n)-3'-uridine ribonucleotide + diphosphate. The enzyme catalyses RNA(n) + ATP = RNA(n)-3'-adenine ribonucleotide + diphosphate. Adenylyltransferase activity is specifically phosphatidylinositol 4,5-bisphosphate (PtdIns(4,5)P2). Poly(A) polymerase that creates the 3'-poly(A) tail of specific pre-mRNAs. Localizes to nuclear speckles together with PIP5K1A and mediates polyadenylation of a select set of mRNAs, such as HMOX1. In addition to polyadenylation, it is also required for the 3'-end cleavage of pre-mRNAs: binds to the 3'UTR of targeted pre-mRNAs and promotes the recruitment and assembly of the CPSF complex on the 3'UTR of pre-mRNAs. In addition to adenylyltransferase activity, also has uridylyltransferase activity. However, the ATP ratio is higher than UTP in cells, suggesting that it functions primarily as a poly(A) polymerase. Acts as a specific terminal uridylyltransferase for U6 snRNA in vitro: responsible for a controlled elongation reaction that results in the restoration of the four 3'-terminal UMP-residues found in newly transcribed U6 snRNA. Not involved in replication-dependent histone mRNA degradation. The sequence is that of Speckle targeted PIP5K1A-regulated poly(A) polymerase (TUT1) from Homo sapiens (Human).